Consider the following 220-residue polypeptide: Uracil-DNA glycosylase 2 (220 aa).

D65 functions as the Proton acceptor in the catalytic mechanism.

This sequence belongs to the uracil-DNA glycosylase (UDG) superfamily. UNG family.

The protein localises to the cytoplasm. It catalyses the reaction Hydrolyzes single-stranded DNA or mismatched double-stranded DNA and polynucleotides, releasing free uracil.. Its function is as follows. Excises uracil residues from the DNA which can arise as a result of misincorporation of dUMP residues by DNA polymerase or due to deamination of cytosine. The chain is Uracil-DNA glycosylase 2 from Bacteroides fragilis (strain ATCC 25285 / DSM 2151 / CCUG 4856 / JCM 11019 / LMG 10263 / NCTC 9343 / Onslow / VPI 2553 / EN-2).